A 259-amino-acid polypeptide reads, in one-letter code: Ribosomal RNA small subunit methyltransferase J (259 aa).

Residues 101 to 102 (RD), 117 to 118 (ER), 153 to 154 (SS), and Asp-176 contribute to the S-adenosyl-L-methionine site.

Belongs to the methyltransferase superfamily. RsmJ family.

The protein resides in the cytoplasm. The catalysed reaction is guanosine(1516) in 16S rRNA + S-adenosyl-L-methionine = N(2)-methylguanosine(1516) in 16S rRNA + S-adenosyl-L-homocysteine + H(+). Specifically methylates the guanosine in position 1516 of 16S rRNA. The polypeptide is Ribosomal RNA small subunit methyltransferase J (Vibrio parahaemolyticus serotype O3:K6 (strain RIMD 2210633)).